A 128-amino-acid polypeptide reads, in one-letter code: MAAFMLGSLLRTFKQMVPSSASGQVRSHYVDWRMWRDVKRRKMAYEYADERLRINSLRKNTILPKILQDVADEEIAALPRDSCPVRIRNRCVMTSRPRGVKRRWRLSRIVFRHLADHGQLSGIQRATW.

The protein belongs to the universal ribosomal protein uS14 family. In terms of assembly, component of the mitochondrial small ribosomal subunit (mt-SSU). Mature mammalian 55S mitochondrial ribosomes consist of a small (28S) and a large (39S) subunit. The 28S small subunit contains a 12S ribosomal RNA (12S mt-rRNA) and 30 different proteins. The 39S large subunit contains a 16S rRNA (16S mt-rRNA), a copy of mitochondrial valine transfer RNA (mt-tRNA(Val)), which plays an integral structural role, and 52 different proteins. Interacts with LIAT1.

The protein localises to the mitochondrion. The chain is Small ribosomal subunit protein uS14m from Homo sapiens (Human).